A 1142-amino-acid chain; its full sequence is Coiled-coil domain-containing protein 40 (1142 aa).

2 disordered regions span residues 1-197 and 251-274; these read MAEP…QVLP and PSTE…AEDE. 2 stretches are compositionally biased toward basic and acidic residues: residues 11-27 and 35-55; these read SHPE…EGNN and PEKD…HPEE. Residues 63–96 show a composition bias toward acidic residues; it reads AIEEGEVETEGEAAVEGEEEAVSYGDAESEEEYY. Phosphoserine is present on serine 252. Residues 265 to 274 show a composition bias toward acidic residues; sequence EGSDEEAEDE. Coiled-coil stretches lie at residues 293–319, 349–470, 526–627, 684–950, and 1005–1054; these read AALK…ATKQ, HDRH…QAED, QAKS…LRRK, TSSR…LGQL, and VRKA…LTRL.

The protein belongs to the CCDC40 family.

It localises to the cytoplasm. The protein resides in the cell projection. Its subcellular location is the cilium. Its function is as follows. Required for assembly of dynein regulatory complex (DRC) and inner dynein arm (IDA) complexes, which are responsible for ciliary beat regulation, thereby playing a central role in motility in cilia and flagella. Probably acts together with CCDC39 to form a molecular ruler that determines the 96 nanometer (nm) repeat length and arrangements of components in cilia and flagella. Not required for outer dynein arm complexes assembly. Required for axonemal recruitment of CCDC39. The sequence is that of Coiled-coil domain-containing protein 40 from Homo sapiens (Human).